Consider the following 388-residue polypeptide: Chorismate synthase (388 aa).

Arginine 39 and arginine 45 together coordinate NADP(+). Residues 95–118 are disordered; that stretch reads EKNEKSRRVSRPRPGHADLVGGMK. Residues 130-132, 251-252, glycine 296, 311-315, and arginine 337 each bind FMN; these read RSS, NA, and KPIPT.

This sequence belongs to the chorismate synthase family. In terms of assembly, homotetramer. Requires FMNH2 as cofactor.

It carries out the reaction 5-O-(1-carboxyvinyl)-3-phosphoshikimate = chorismate + phosphate. The protein operates within metabolic intermediate biosynthesis; chorismate biosynthesis; chorismate from D-erythrose 4-phosphate and phosphoenolpyruvate: step 7/7. Catalyzes the anti-1,4-elimination of the C-3 phosphate and the C-6 proR hydrogen from 5-enolpyruvylshikimate-3-phosphate (EPSP) to yield chorismate, which is the branch point compound that serves as the starting substrate for the three terminal pathways of aromatic amino acid biosynthesis. This reaction introduces a second double bond into the aromatic ring system. The protein is Chorismate synthase of Listeria monocytogenes serotype 4b (strain CLIP80459).